Consider the following 168-residue polypeptide: Photosystem I assembly protein Ycf3 (168 aa).

3 TPR repeats span residues 35-68 (AFTY…EIDP), 72-105 (SYIL…NPFL), and 120-153 (GEQA…TPGN).

The protein belongs to the Ycf3 family.

It localises to the plastid. The protein resides in the chloroplast thylakoid membrane. Essential for the assembly of the photosystem I (PSI) complex. May act as a chaperone-like factor to guide the assembly of the PSI subunits. In Solanum bulbocastanum (Wild potato), this protein is Photosystem I assembly protein Ycf3.